A 61-amino-acid chain; its full sequence is Small ribosomal subunit protein uS14 (61 aa).

Residues C24, C27, C40, and C43 each coordinate Zn(2+).

This sequence belongs to the universal ribosomal protein uS14 family. Zinc-binding uS14 subfamily. Part of the 30S ribosomal subunit. Contacts proteins S3 and S10. The cofactor is Zn(2+).

Functionally, binds 16S rRNA, required for the assembly of 30S particles and may also be responsible for determining the conformation of the 16S rRNA at the A site. The polypeptide is Small ribosomal subunit protein uS14 (Roseiflexus sp. (strain RS-1)).